The chain runs to 72 residues: Translation initiation factor IF-1 (72 aa).

An S1-like domain is found at 1 to 72 (MAKDDVIEVE…TRGRITYRYK (72 aa)). Tyrosine 60 bears the Phosphotyrosine mark.

Belongs to the IF-1 family. As to quaternary structure, component of the 30S ribosomal translation pre-initiation complex which assembles on the 30S ribosome in the order IF-2 and IF-3, IF-1 and N-formylmethionyl-tRNA(fMet); mRNA recruitment can occur at any time during PIC assembly.

It localises to the cytoplasm. Functionally, one of the essential components for the initiation of protein synthesis. Stabilizes the binding of IF-2 and IF-3 on the 30S subunit to which N-formylmethionyl-tRNA(fMet) subsequently binds. Helps modulate mRNA selection, yielding the 30S pre-initiation complex (PIC). Upon addition of the 50S ribosomal subunit IF-1, IF-2 and IF-3 are released leaving the mature 70S translation initiation complex. This is Translation initiation factor IF-1 from Bacillus licheniformis (strain ATCC 14580 / DSM 13 / JCM 2505 / CCUG 7422 / NBRC 12200 / NCIMB 9375 / NCTC 10341 / NRRL NRS-1264 / Gibson 46).